Here is a 472-residue protein sequence, read N- to C-terminus: Probable endopolygalacturonase D (472 aa).

The first 16 residues, 1-16 (MKRGALLVPFVPLALA), serve as a signal peptide directing secretion. Residue Asn-24 is glycosylated (N-linked (GlcNAc...) asparagine). An intrachain disulfide couples Cys-129 to Cys-144. PbH1 repeat units follow at residues 236–258 (MYYS…DIEH), 259–297 (TENL…DIKS), and 298–319 (STNL…AVSS). N-linked (GlcNAc...) asparagine glycosylation occurs at Asn-300. Asp-312 serves as the catalytic Proton donor. Cys-314 and Cys-330 form a disulfide bridge. Residue His-334 is part of the active site. PbH1 repeat units lie at residues 349 to 370 (VDGV…RIKS), 378 to 400 (VSNI…DIQQ), 412 to 433 (TNGV…SDGK), and 444 to 467 (CSNF…YPTD). N-linked (GlcNAc...) asparagine glycans are attached at residues Asn-361, Asn-385, and Asn-419. Cystine bridges form between Cys-439-Cys-444 and Cys-462-Cys-469.

Belongs to the glycosyl hydrolase 28 family.

It is found in the secreted. The enzyme catalyses (1,4-alpha-D-galacturonosyl)n+m + H2O = (1,4-alpha-D-galacturonosyl)n + (1,4-alpha-D-galacturonosyl)m.. In terms of biological role, involved in maceration and soft-rotting of plant tissue. Hydrolyzes the 1,4-alpha glycosidic bonds of de-esterified pectate in the smooth region of the plant cell wall. The sequence is that of Probable endopolygalacturonase D (pgaD) from Neosartorya fischeri (strain ATCC 1020 / DSM 3700 / CBS 544.65 / FGSC A1164 / JCM 1740 / NRRL 181 / WB 181) (Aspergillus fischerianus).